Reading from the N-terminus, the 146-residue chain is Hemoglobin subunit beta (146 aa).

One can recognise a Globin domain in the interval 2-146 (FLTPEENGHV…VANALAHKYH (145 aa)). Position 12 is a phosphothreonine (Thr12). Ser44 carries the phosphoserine modification. At Lys59 the chain carries N6-acetyllysine. His63 lines the heme b pocket. Lys82 carries the post-translational modification N6-acetyllysine. His92 serves as a coordination point for heme b. Cys93 carries the S-nitrosocysteine modification. The residue at position 144 (Lys144) is an N6-acetyllysine.

It belongs to the globin family. Heterotetramer of two alpha chains and two beta chains. As to expression, red blood cells.

Its function is as follows. Involved in oxygen transport from the lung to the various peripheral tissues. The sequence is that of Hemoglobin subunit beta (HBB) from Hapalemur griseus (Gray gentle lemur).